Consider the following 77-residue polypeptide: Serine protease inhibitor 2 (77 aa).

Positions 1 to 17 (MMFTPLIVLTLLVLATA) are cleaved as a signal peptide. Disulfide bonds link cysteine 21–cysteine 53, cysteine 30–cysteine 48, cysteine 33–cysteine 44, cysteine 37–cysteine 74, and cysteine 55–cysteine 68. The TIL domain maps to 21 to 74 (CGPNEQWSDCPKCELQCGESDKPCATICGEPKCYCSPDKYRRIPDGRCIRKIQC).

It is found in the secreted. Its function is as follows. Defends the organism against the host's proteinases. In Anisakis simplex (Herring worm), this protein is Serine protease inhibitor 2.